Here is a 338-residue protein sequence, read N- to C-terminus: Protein FosB (338 aa).

2 disordered regions span residues 1-54 (MFQA…PGSF) and 80-179 (AQSQ…RREL). The segment covering 13 to 31 (SRCSSSPSAESQYLSSVDS) has biased composition (polar residues). Residue S27 is modified to Phosphoserine. The segment covering 123–137 (PSTSTSTSGPVSARP) has biased composition (low complexity). Positions 155-218 (EEKRRVRRER…ERLEFVLVAH (64 aa)) constitute a bZIP domain. The interval 157-182 (KRRVRRERNKLAAAKCRNRRRELTDR) is basic motif. Positions 183 to 211 (LQAETDQLEEEKAELESEIAELQKEKERL) are leucine-zipper. 2 disordered regions span residues 222 to 276 (CKIP…PPNL) and 315 to 338 (AGSQ…LLAL). Residues 256–265 (LPPPPPPPLP) are compositionally biased toward pro residues. Residues 266–276 (FQSSRDAPPNL) show a composition bias toward polar residues.

It belongs to the bZIP family. Fos subfamily. Heterodimer; binds to DNA as heterodimer. Component of an AP-1 transcription factor complex; composed of FOS-JUN heterodimers. As part of the AP-1 transcription factor complex, forms heterodimers with JUN, JUNB or JUND, thereby binding to the AP-1 consensus sequence and stimulating transcription. Post-translationally, phosphorylated; phosphorylation is induced by chronic electroconvulsive seizure (ECS) treatment. In terms of tissue distribution, expressed in brain. Expressed in pyramidal cells in CA1 and CA3, in the dentate gyrus and the nucleus accumbens (at protein level).

It localises to the nucleus. Functionally, heterodimerizes with proteins of the JUN family to form an AP-1 transcription factor complex, thereby enhancing their DNA binding activity to an AP-1 consensus sequence 5'-TGA[GC]TCA-3' and enhancing their transcriptional activity. Exhibits transactivation activity in vitro. As part of the AP-1 complex, facilitates enhancer selection together with cell-type-specific transcription factors by collaboratively binding to nucleosomal enhancers and recruiting the SWI/SNF (BAF) chromatin remodeling complex to establish accessible chromatin. Together with JUN, plays a role in activation-induced cell death of T cells by binding to the AP-1 promoter site of FASLG/CD95L, and inducing its transcription in response to activation of the TCR/CD3 signaling pathway. Involved in the display of nurturing behavior towards newborns. May play a role in neurogenesis in the hippocampus and in learning and memory-related tasks by regulating the expression of various genes involved in neurogenesis, depression and epilepsy. Implicated in behavioral responses related to morphine reward and spatial memory. The sequence is that of Protein FosB from Rattus norvegicus (Rat).